We begin with the raw amino-acid sequence, 231 residues long: Cytochrome c oxidase assembly factor 7 (231 aa).

Ala-2 carries the N-acetylalanine modification. Sel1-like repeat units lie at residues 34–66 (PEGC…EKYG), 68–104 (GDSC…EKPG), 108–146 (VESC…DGGY), 147–183 (AASC…DLGH), and 184–219 (VWAC…QLHK).

Belongs to the hcp beta-lactamase family. In terms of assembly, interacts with CHCHD4/MIA40 through transient intermolecular disulfide bonds.

It is found in the mitochondrion intermembrane space. Required for assembly of mitochondrial respiratory chain complex I and complex IV. This is Cytochrome c oxidase assembly factor 7 (Coa7) from Mus musculus (Mouse).